The primary structure comprises 1466 residues: Adhesion G protein-coupled receptor L1 (1466 aa).

The signal sequence occupies residues 1 to 28; the sequence is MARLAAALWSLCVTTVLVTSATQGLSRA. The Extracellular portion of the chain corresponds to 29–852; the sequence is GLPFGLMRRE…EIYQGRINEL (824 aa). Positions 40 to 129 constitute an SUEL-type lectin domain; sequence ACEGYPIELR…KYLEVQYDCV (90 aa). Intrachain disulfides connect C41/C71, C50/C128, C83/C115, C96/C102, and C135/C317. Residue E42 participates in alpha-L-rhamnose binding. N98 is a glycosylation site (N-linked (GlcNAc...) asparagine). 117–120 is a binding site for alpha-L-rhamnose; it reads GTYK. The Olfactomedin-like domain maps to 134-393; sequence VCPGTLQKVL…VVRYSLEFGP (260 aa). The disordered stretch occupies residues 395-463; the sequence is DPSAGPATSP…APAPSTRRPP (69 aa). Positions 400 to 436 are enriched in low complexity; sequence PATSPPLSTTTTARPTPLTSTASPAATTPLRRAPLTT. Positions 448-463 are enriched in pro residues; that stretch reads DLPPATAPAPSTRRPP. Intrachain disulfides connect C475-C510 and C498-C527. N-linked (GlcNAc...) asparagine glycans are attached at residues N526, N635, N736, N795, N800, and N821. In terms of domain architecture, GAIN-B spans 664-845; that stretch reads PARFLAAKQN…AVLMAHREIY (182 aa). Disulfide bonds link C796-C827 and C815-C829. Positions 796 to 845 are GPS; the sequence is CSFWNYSERSMLGYWSTQGCRLVESNKTHTTCACSHLTNFAVLMAHREIY. A helical transmembrane segment spans residues 853-873; sequence LLSVITWVGIVISLVCLAICI. The Cytoplasmic segment spans residues 874 to 887; that stretch reads STFCFLRGLQTDRN. Residues 888–908 form a helical membrane-spanning segment; the sequence is TIHKNLCINLFLAELLFLVGI. Residues 909-914 lie on the Extracellular side of the membrane; the sequence is DKTQYE. A helical transmembrane segment spans residues 915–935; that stretch reads VACPIFAGLLHYFFLAAFSWL. Over 936 to 958 the chain is Cytoplasmic; sequence CLEGVHLYLLLVEVFESEYSRTK. Residues 959 to 979 form a helical membrane-spanning segment; sequence YYYLGGYCFPALVVGIAAAID. The Extracellular portion of the chain corresponds to 980-996; the sequence is YRSYGTEKACWLRVDNY. A helical transmembrane segment spans residues 997–1017; that stretch reads FIWSFIGPVSFVIVVNLVFLM. Residues 1018–1044 are Cytoplasmic-facing; it reads VTLHKMIRSSSVLKPDSSRLDNIKSWA. A helical transmembrane segment spans residues 1045 to 1065; that stretch reads LGAIALLFLLGLTWAFGLLFI. The Extracellular portion of the chain corresponds to 1066 to 1069; the sequence is NKES. The helical transmembrane segment at 1070 to 1090 threads the bilayer; the sequence is VVMAYLFTTFNAFQGVFIFVF. The Cytoplasmic segment spans residues 1091–1466; sequence HCALQKKVHK…DGQMQLVTSL (376 aa). R1188 bears the Omega-N-methylarginine mark. Phosphoserine is present on S1214. 4 disordered regions span residues 1242–1267, 1288–1319, 1352–1421, and 1443–1466; these read FNNS…RGRN, RGAS…GPGS, ESES…SRPP, and YLAA…VTSL. Pro residues predominate over residues 1296 to 1307; that stretch reads GPPPEPPVPPVP. S1319 is modified (phosphoserine). The span at 1400-1412 shows a compositional bias: pro residues; sequence ALPPPPPAPPGPP. Phosphoserine is present on residues S1448 and S1465.

This sequence belongs to the G-protein coupled receptor 2 family. Adhesion G-protein coupled receptor (ADGR) subfamily. In terms of assembly, forms a heterodimer, consisting of a large extracellular region (p120) non-covalently linked to a seven-transmembrane moiety (p85). Interacts with syntaxin and with proteins of the SHANK family via the PDZ domain. Interacts (via extracellular domain) with FLRT1, FLRT2 and FLRT3 (via extracellular domain). Autoproteolytically cleaved into 2 subunits, an extracellular subunit and a seven-transmembrane subunit. This proteolytic processing takes place early in the biosynthetic pathway, either in the endoplasmic reticulum or in the early compartment of the Golgi apparatus.

Its subcellular location is the cell membrane. It is found in the cell projection. It localises to the axon. The protein localises to the growth cone. The protein resides in the synapse. Its subcellular location is the presynaptic cell membrane. It is found in the synaptosome. Functionally, calcium-independent receptor of high affinity for alpha-latrotoxin, an excitatory neurotoxin present in black widow spider venom which triggers massive exocytosis from neurons and neuroendocrine cells. Receptor for TENM2 that mediates heterophilic synaptic cell-cell contact and postsynaptic specialization. Receptor probably implicated in the regulation of exocytosis. In Mus musculus (Mouse), this protein is Adhesion G protein-coupled receptor L1.